The primary structure comprises 73 residues: Large ribosomal subunit protein bL31 (73 aa).

Positions 34–43 (KMNLDIDPKS) are enriched in basic and acidic residues. Residues 34 to 54 (KMNLDIDPKSHPAWTGGTQQM) are disordered.

The protein belongs to the bacterial ribosomal protein bL31 family. Type A subfamily. As to quaternary structure, part of the 50S ribosomal subunit.

Its function is as follows. Binds the 23S rRNA. The chain is Large ribosomal subunit protein bL31 from Rhodopseudomonas palustris (strain BisA53).